A 313-amino-acid chain; its full sequence is Pseudouridine-5'-phosphate glycosidase (313 aa).

The active-site Proton donor is Glu-34. Substrate contacts are provided by Lys-95 and Val-115. Asp-147 lines the Mn(2+) pocket. Substrate is bound at residue 149–151 (SAD). Lys-168 (nucleophile) is an active-site residue.

Belongs to the pseudouridine-5'-phosphate glycosidase family. Homotrimer. Mn(2+) serves as cofactor.

It carries out the reaction D-ribose 5-phosphate + uracil = psi-UMP + H2O. In terms of biological role, catalyzes the reversible cleavage of pseudouridine 5'-phosphate (PsiMP) to ribose 5-phosphate and uracil. Functions biologically in the cleavage direction, as part of a pseudouridine degradation pathway. The sequence is that of Pseudouridine-5'-phosphate glycosidase from Deinococcus radiodurans (strain ATCC 13939 / DSM 20539 / JCM 16871 / CCUG 27074 / LMG 4051 / NBRC 15346 / NCIMB 9279 / VKM B-1422 / R1).